Reading from the N-terminus, the 268-residue chain is Putative hydro-lyase A1S_1268 (268 aa).

This sequence belongs to the D-glutamate cyclase family.

This is Putative hydro-lyase A1S_1268 from Acinetobacter baumannii (strain ATCC 17978 / DSM 105126 / CIP 53.77 / LMG 1025 / NCDC KC755 / 5377).